The sequence spans 164 residues: Protein-export protein SecB (164 aa).

The protein belongs to the SecB family. As to quaternary structure, homotetramer, a dimer of dimers. One homotetramer interacts with 1 SecA dimer.

It is found in the cytoplasm. One of the proteins required for the normal export of preproteins out of the cell cytoplasm. It is a molecular chaperone that binds to a subset of precursor proteins, maintaining them in a translocation-competent state. It also specifically binds to its receptor SecA. This Burkholderia orbicola (strain MC0-3) protein is Protein-export protein SecB.